Here is a 343-residue protein sequence, read N- to C-terminus: L-threonine 3-dehydrogenase (343 aa).

A Zn(2+)-binding site is contributed by Cys38. Residues Thr40 and His43 each act as charge relay system in the active site. Zn(2+) contacts are provided by His63, Glu64, Cys93, Cys96, Cys99, and Cys107. Residues Ile175, Asp195, Arg200, 262–264 (LGI), and 286–287 (IY) contribute to the NAD(+) site.

The protein belongs to the zinc-containing alcohol dehydrogenase family. Homotetramer. The cofactor is Zn(2+).

The protein localises to the cytoplasm. It catalyses the reaction L-threonine + NAD(+) = (2S)-2-amino-3-oxobutanoate + NADH + H(+). It participates in amino-acid degradation; L-threonine degradation via oxydo-reductase pathway; glycine from L-threonine: step 1/2. In terms of biological role, catalyzes the NAD(+)-dependent oxidation of L-threonine to 2-amino-3-ketobutyrate. In Paraburkholderia phytofirmans (strain DSM 17436 / LMG 22146 / PsJN) (Burkholderia phytofirmans), this protein is L-threonine 3-dehydrogenase.